Here is a 155-residue protein sequence, read N- to C-terminus: 3-hydroxyacyl-[acyl-carrier-protein] dehydratase FabZ (155 aa).

H57 is an active-site residue.

This sequence belongs to the thioester dehydratase family. FabZ subfamily.

The protein localises to the cytoplasm. It catalyses the reaction a (3R)-hydroxyacyl-[ACP] = a (2E)-enoyl-[ACP] + H2O. In terms of biological role, involved in unsaturated fatty acids biosynthesis. Catalyzes the dehydration of short chain beta-hydroxyacyl-ACPs and long chain saturated and unsaturated beta-hydroxyacyl-ACPs. In Sorangium cellulosum (strain So ce56) (Polyangium cellulosum (strain So ce56)), this protein is 3-hydroxyacyl-[acyl-carrier-protein] dehydratase FabZ.